The following is a 90-amino-acid chain: UPF0297 protein Cthe_0151 (90 aa).

Belongs to the UPF0297 family.

The polypeptide is UPF0297 protein Cthe_0151 (Acetivibrio thermocellus (strain ATCC 27405 / DSM 1237 / JCM 9322 / NBRC 103400 / NCIMB 10682 / NRRL B-4536 / VPI 7372) (Clostridium thermocellum)).